A 316-amino-acid polypeptide reads, in one-letter code: Apolipoprotein E (316 aa).

The N-terminal stretch at 1–18 (MKALWAVLVVTLLAGCLA) is a signal peptide. Repeat copies occupy residues 76–97 (VLMEDTMTELKAYKKELEEQLG), 98–119 (PMAEETRARLAKEVQAAQSRLG), 120–141 (ADMEDLRNRLAQYRNEVHTMLG), 142–163 (QSTEELRARLSTHLRKLRKRLM), 164–185 (RDAEDLQKRLAVYKAGAREGAE), 186–207 (RGVGAIRERLGPLVEQGRQRTA), 208–229 (NLGAGAGKPLQDRAQALGARIR), and 230–251 (GRLEEVGNQARDRLEEMREQME). The 8 X 22 AA approximate tandem repeats stretch occupies residues 76-251 (VLMEDTMTEL…RLEEMREQME (176 aa)). Position 139 is a methionine sulfoxide (Met139). Position 143 is a phosphoserine (Ser143). The interval 154–164 (HLRKLRKRLMR) is LDL and other lipoprotein receptors binding. Position 158–161 (158–161 (LRKR)) interacts with heparin. Residues 206 to 286 (TANLGAGAGK…GWFEPLVEDM (81 aa)) form a lipid-binding and lipoprotein association region. Position 225–232 (225–232 (GARIRGRL)) interacts with heparin. Residues 262–316 (QQMRLQAEIFQARLKGWFEPLVEDMQRQWANLVEKIQASVAANPIPPSSVPQESP) are homooligomerization. A specificity for association with VLDL region spans residues 274 to 286 (RLKGWFEPLVEDM).

This sequence belongs to the apolipoprotein A1/A4/E family. As to quaternary structure, homotetramer. May interact with ABCA1; functionally associated with ABCA1 in the biogenesis of HDLs. May interact with APP/A4 amyloid-beta peptide; the interaction is extremely stable in vitro but its physiological significance is unclear. May interact with MAPT. May interact with MAP2. In the cerebrospinal fluid, interacts with secreted SORL1. Interacts with PMEL; this allows the loading of PMEL luminal fragment on ILVs to induce fibril nucleation. In terms of processing, APOE exists as multiple glycosylated and sialylated glycoforms within cells and in plasma. The extent of glycosylation and sialylation are tissue and context specific. Post-translationally, glycated in plasma VLDL. Phosphorylated by FAM20C in the extracellular medium.

It localises to the secreted. Its subcellular location is the extracellular space. It is found in the extracellular matrix. The protein localises to the extracellular vesicle. The protein resides in the endosome. It localises to the multivesicular body. Its function is as follows. APOE is an apolipoprotein, a protein associating with lipid particles, that mainly functions in lipoprotein-mediated lipid transport between organs via the plasma and interstitial fluids. APOE is a core component of plasma lipoproteins and is involved in their production, conversion and clearance. Apolipoproteins are amphipathic molecules that interact both with lipids of the lipoprotein particle core and the aqueous environment of the plasma. As such, APOE associates with chylomicrons, chylomicron remnants, very low density lipoproteins (VLDL) and intermediate density lipoproteins (IDL) but shows a preferential binding to high-density lipoproteins (HDL). It also binds a wide range of cellular receptors including the LDL receptor/LDLR, the LDL receptor-related proteins LRP1, LRP2 and LRP8 and the very low-density lipoprotein receptor/VLDLR that mediate the cellular uptake of the APOE-containing lipoprotein particles. Finally, APOE also has a heparin-binding activity and binds heparan-sulfate proteoglycans on the surface of cells, a property that supports the capture and the receptor-mediated uptake of APOE-containing lipoproteins by cells. A main function of APOE is to mediate lipoprotein clearance through the uptake of chylomicrons, VLDLs, and HDLs by hepatocytes. APOE is also involved in the biosynthesis by the liver of VLDLs as well as their uptake by peripheral tissues ensuring the delivery of triglycerides and energy storage in muscle, heart and adipose tissues. By participating in the lipoprotein-mediated distribution of lipids among tissues, APOE plays a critical role in plasma and tissues lipid homeostasis. APOE is also involved in two steps of reverse cholesterol transport, the HDLs-mediated transport of cholesterol from peripheral tissues to the liver, and thereby plays an important role in cholesterol homeostasis. First, it is functionally associated with ABCA1 in the biogenesis of HDLs in tissues. Second, it is enriched in circulating HDLs and mediates their uptake by hepatocytes. APOE also plays an important role in lipid transport in the central nervous system, regulating neuron survival and sprouting. The sequence is that of Apolipoprotein E (Apoe) from Peromyscus leucopus (White-footed mouse).